A 63-amino-acid chain; its full sequence is MVFQLVCSTCGRDISEERYALLIKKIDLKTVLRGVKNNCCRLKLSTQIEPQRNLTVEPLLDIN.

It belongs to the poxviridae DNA-directed RNA polymerase 7 kDa subunit family. In terms of assembly, the DNA-dependent RNA polymerase used for intermediate and late genes expression consists of eight subunits 147 kDa, 133 kDa, 35 kDa, 30 kDa, 22 kDa, 19 kDa, 18 kDa and 7 kDa totalling more than 500 kDa in mass. The same holoenzyme, with the addition of the transcription-specificity factor RAP94, is used for early gene expression.

The protein resides in the virion. The enzyme catalyses RNA(n) + a ribonucleoside 5'-triphosphate = RNA(n+1) + diphosphate. Functionally, part of the DNA-dependent RNA polymerase which catalyzes the transcription of viral DNA into RNA using the four ribonucleoside triphosphates as substrates. Responsible for the transcription of early, intermediate and late genes. DNA-dependent RNA polymerase associates with the early transcription factor (ETF) thereby allowing the early genes transcription. Late transcription, and probably also intermediate transcription, require newly synthesized RNA polymerase. The chain is DNA-directed RNA polymerase 7 kDa subunit (RPO7) from Myxoma virus (strain Lausanne) (MYXV).